Here is a 144-residue protein sequence, read N- to C-terminus: Glycine-rich protein DC9.1 (144 aa).

A helical transmembrane segment spans residues 5–25 (IFLLLGLSIAFAILISSEVAA). 11 repeat units span residues 37 to 42 (GYNNGG), 43 to 48 (GYHNGG), 50 to 55 (GYNNGG), 56 to 61 (GYHNGG), 63 to 68 (GYNNGG), 69 to 74 (GYHNGG), 76 to 81 (GYNNGG), 82 to 87 (GYHNGG), 89 to 94 (GYNNGG), 102 to 107 (GYNNGG), and 108 to 113 (GHHGGG). The segment at 37-113 (GYNNGGGYHN…NNGGGHHGGG (77 aa)) is 11 X 6 AA tandem repeats of G-Y-[NH]-N-G -G.

It belongs to the GRP family.

The protein resides in the membrane. This Daucus carota (Wild carrot) protein is Glycine-rich protein DC9.1.